Here is a 642-residue protein sequence, read N- to C-terminus: Threonine--tRNA ligase (642 aa).

Residues M1–T61 form the TGS domain. Residues D244–P535 form a catalytic region. The Zn(2+) site is built by C335, H386, and H512.

Belongs to the class-II aminoacyl-tRNA synthetase family. In terms of assembly, homodimer. It depends on Zn(2+) as a cofactor.

It is found in the cytoplasm. The catalysed reaction is tRNA(Thr) + L-threonine + ATP = L-threonyl-tRNA(Thr) + AMP + diphosphate + H(+). Its function is as follows. Catalyzes the attachment of threonine to tRNA(Thr) in a two-step reaction: L-threonine is first activated by ATP to form Thr-AMP and then transferred to the acceptor end of tRNA(Thr). Also edits incorrectly charged L-seryl-tRNA(Thr). In Vibrio vulnificus (strain YJ016), this protein is Threonine--tRNA ligase.